A 248-amino-acid chain; its full sequence is DNA repair protein RecO (248 aa).

This sequence belongs to the RecO family.

Its function is as follows. Involved in DNA repair and RecF pathway recombination. The sequence is that of DNA repair protein RecO from Bradyrhizobium sp. (strain ORS 278).